The primary structure comprises 493 residues: MPDHKEEKIRVYRNPAKNEEYFKNRVGMGTSYDVGVRKLTILDKEIQLYYLNGLCDTAYIIHLMRELVAINNRKEDPDELVDIVENRLLNAQVEKVKTLDETTDQVLSGLVAVIVEGAGFAFIIDVRSYPGRNPEEPDTEKVVRGARDGFVENIVVNTALLRRRIRDERLRVKMTKVGERSKTDLSICYIEDIADPDLVEIVEKEIASIDVDGLTMADKTVEEFIVNQSYNPFPLVRYTERPDVAANHVLEGHVIIIVDTSPSVIITPTTLFHHVQHAEEYRQAPSVGTFLRWVRFFGILASTLFLPIWFLFVLQPDLLPDNMKFIGLNKDTHIPIILQIFLADLGIEFLRMAAIHTPTALSTAMGLIAAVLIGQIAIEVGLFSPEVILYVSLAAIGTFTTPSYELSLANKMSRLVLMILVALFHIKGLVIGFTVLIIAMASIKSLQTPYLWPLIPFNGKALWQVLVRTAKPGAKVRPSIVHPKNRLRQPTNS.

A run of 5 helical transmembrane segments spans residues 296–316 (FFGILASTLFLPIWFLFVLQP), 334–354 (IPIILQIFLADLGIEFLRMAA), 363–383 (TAMGLIAAVLIGQIAIEVGLF), 387–407 (VILYVSLAAIGTFTTPSYELS), and 418–438 (MILVALFHIKGLVIGFTVLII).

The protein belongs to the GerABKA family.

It is found in the cell membrane. This Bacillus subtilis (strain 168) protein is Stage V sporulation protein AF (spoVAF).